The following is a 307-amino-acid chain: Glutaminase (307 aa).

The substrate site is built by S66, N116, E160, N167, Y191, Y243, and V261.

It belongs to the glutaminase family. In terms of assembly, homotetramer.

The enzyme catalyses L-glutamine + H2O = L-glutamate + NH4(+). The chain is Glutaminase from Saccharophagus degradans (strain 2-40 / ATCC 43961 / DSM 17024).